The chain runs to 327 residues: Malate dehydrogenase (327 aa).

G11–S17 is a binding site for NAD(+). Positions 92 and 98 each coordinate substrate. Residues N105, Q112, and V129 to N131 contribute to the NAD(+) site. Substrate contacts are provided by N131 and R162. The active-site Proton acceptor is H187.

Belongs to the LDH/MDH superfamily. MDH type 2 family.

The enzyme catalyses (S)-malate + NAD(+) = oxaloacetate + NADH + H(+). Its function is as follows. Catalyzes the reversible oxidation of malate to oxaloacetate. This chain is Malate dehydrogenase, found in Saccharophagus degradans (strain 2-40 / ATCC 43961 / DSM 17024).